The following is a 71-amino-acid chain: cAMP-dependent protein kinase inhibitor beta (71 aa).

The segment at Met-1–Asn-21 is disordered. Residue Thr-2 is modified to Blocked amino end (Thr). At Ser-35 the chain carries Phosphoserine. A disordered region spans residues Ala-51 to Lys-71.

The protein belongs to the PKI family. Testis.

Functionally, extremely potent competitive inhibitor of cAMP-dependent protein kinase activity, this protein interacts with the catalytic subunit of the enzyme after the cAMP-induced dissociation of its regulatory chains. This is cAMP-dependent protein kinase inhibitor beta (Pkib) from Rattus norvegicus (Rat).